We begin with the raw amino-acid sequence, 211 residues long: ATP phosphoribosyltransferase (211 aa).

Belongs to the ATP phosphoribosyltransferase family. Short subfamily. In terms of assembly, heteromultimer composed of HisG and HisZ subunits.

Its subcellular location is the cytoplasm. The catalysed reaction is 1-(5-phospho-beta-D-ribosyl)-ATP + diphosphate = 5-phospho-alpha-D-ribose 1-diphosphate + ATP. The protein operates within amino-acid biosynthesis; L-histidine biosynthesis; L-histidine from 5-phospho-alpha-D-ribose 1-diphosphate: step 1/9. Its function is as follows. Catalyzes the condensation of ATP and 5-phosphoribose 1-diphosphate to form N'-(5'-phosphoribosyl)-ATP (PR-ATP). Has a crucial role in the pathway because the rate of histidine biosynthesis seems to be controlled primarily by regulation of HisG enzymatic activity. In Bacillus cereus (strain ATCC 14579 / DSM 31 / CCUG 7414 / JCM 2152 / NBRC 15305 / NCIMB 9373 / NCTC 2599 / NRRL B-3711), this protein is ATP phosphoribosyltransferase.